Consider the following 595-residue polypeptide: Coagulation factor XII (595 aa).

Positions 1–19 are cleaved as a signal peptide; sequence MTALLFLGSLLMSLDLTLS. The Fibronectin type-II domain occupies 41-89; the sequence is VDGKLCHFPFQYHRRLYHKCIHKGQPGSRPWCATTPNFDEDQQWGYCLE. 13 disulfides stabilise this stretch: C46/C72, C60/C87, C97/C109, C103/C118, C120/C129, C134/C162, C160/C169, C177/C188, C182/C197, C199/C208, C216/C294, C237/C276, and C265/C289. Residues 93 to 130 enclose the EGF-like 1 domain; it reads VKDHCSKHSPCHKGGTCVNTPNGPHCLCPEHLTGKHCQ. O-linked (Fuc) threonine glycosylation is present at T108. In terms of domain architecture, Fibronectin type-I spans 132-172; the sequence is EKCFESQLLKFFHENEIWFRTGPGGVARCQCKGPQAVCKLL. The EGF-like 2 domain occupies 173–209; that stretch reads TSQVCRVNPCLNGGTCLLVEDHRLCHCPAGYAGPFCD. In terms of domain architecture, Kringle spans 215 to 294; that stretch reads TCYEDRGLSY…SWDYCDLEQC (80 aa). The N-linked (GlcNAc...) asparagine glycan is linked to N248. T298 carries an O-linked (GalNAc...) threonine glycan. Residues 302 to 332 form a disordered region; the sequence is PVSPESHDMLKPRPPILQSSPRDSTRNQNVV. A glycan (O-linked (GalNAc...) serine) is linked at S307. Residues 318–332 are compositionally biased toward polar residues; it reads LQSSPRDSTRNQNVV. An O-linked (GalNAc...) threonine glycan is attached at T326. 7 disulfides stabilise this stretch: C340-C466, C378-C394, C386-C455, C417-C420, C480-C549, C512-C528, and C539-C570. Positions 354-594 constitute a Peptidase S1 domain; it reads VVGGLVALPG…YLDWIQEHTA (241 aa). Residue H393 is the Charge relay system of the active site. An N-linked (GlcNAc...) asparagine glycan is attached at N414. Residue D442 is the Charge relay system of the active site. The active-site Charge relay system is the S543.

It belongs to the peptidase S1 family. In terms of assembly, interacts with HRG; the interaction, which is enhanced in the presence of zinc ions and inhibited by heparin-binding, inhibits factor XII autoactivation and contact-initiated coagulation. O- and N-glycosylated.

The protein resides in the secreted. The catalysed reaction is Selective cleavage of Arg-|-Ile bonds in factor VII to form factor VIIa and factor XI to form factor XIa.. Its activity is regulated as follows. Activity is promoted in the presence of negatively charged surfaces. Its function is as follows. Factor XII is a serum glycoprotein that participates in the initiation of blood coagulation, fibrinolysis, and the generation of bradykinin and angiotensin. Prekallikrein is cleaved by factor XII to form kallikrein, which then cleaves factor XII first to alpha-factor XIIa and then trypsin cleaves it to beta-factor XIIa. Alpha-factor XIIa activates factor XI to factor XIa. The chain is Coagulation factor XII (F12) from Rattus norvegicus (Rat).